Here is a 305-residue protein sequence, read N- to C-terminus: Coiled-coil domain-containing protein 69 (305 aa).

Gly2 carries the N-myristoyl glycine lipid modification. The segment at Leu13–Pro41 is disordered. Coiled-coil stretches lie at residues Asn42–Ser167 and Met216–Asn278.

This sequence belongs to the CCDC69 family.

It is found in the cytoplasm. Its subcellular location is the cytoskeleton. It localises to the spindle. The protein resides in the midbody. Its function is as follows. May act as a scaffold to regulate the recruitment and assembly of spindle midzone components. This Xenopus tropicalis (Western clawed frog) protein is Coiled-coil domain-containing protein 69 (ccdc69).